Consider the following 100-residue polypeptide: Co-chaperonin GroES (100 aa).

Belongs to the GroES chaperonin family. Heptamer of 7 subunits arranged in a ring. Interacts with the chaperonin GroEL.

Its subcellular location is the cytoplasm. Its function is as follows. Together with the chaperonin GroEL, plays an essential role in assisting protein folding. The GroEL-GroES system forms a nano-cage that allows encapsulation of the non-native substrate proteins and provides a physical environment optimized to promote and accelerate protein folding. GroES binds to the apical surface of the GroEL ring, thereby capping the opening of the GroEL channel. This Mycolicibacterium paratuberculosis (strain ATCC BAA-968 / K-10) (Mycobacterium paratuberculosis) protein is Co-chaperonin GroES.